The following is a 593-amino-acid chain: Aspartate--tRNA(Asp/Asn) ligase (593 aa).

L-aspartate is bound at residue glutamate 173. An aspartate region spans residues 197-200; the sequence is QLFK. Residue arginine 219 coordinates L-aspartate. ATP contacts are provided by residues 219–221 and glutamine 228; that span reads RDE. Histidine 451 lines the L-aspartate pocket. Position 485 (glutamate 485) interacts with ATP. Arginine 492 is an L-aspartate binding site. 537-540 is an ATP binding site; it reads GIDR.

The protein belongs to the class-II aminoacyl-tRNA synthetase family. Type 1 subfamily. Homodimer.

It localises to the cytoplasm. It catalyses the reaction tRNA(Asx) + L-aspartate + ATP = L-aspartyl-tRNA(Asx) + AMP + diphosphate. Aspartyl-tRNA synthetase with relaxed tRNA specificity since it is able to aspartylate not only its cognate tRNA(Asp) but also tRNA(Asn). Reaction proceeds in two steps: L-aspartate is first activated by ATP to form Asp-AMP and then transferred to the acceptor end of tRNA(Asp/Asn). The chain is Aspartate--tRNA(Asp/Asn) ligase from Legionella pneumophila (strain Corby).